A 345-amino-acid polypeptide reads, in one-letter code: Uroporphyrinogen decarboxylase (345 aa).

Substrate contacts are provided by residues 26-30 (RQAGR), D76, Y151, S205, and H321.

It belongs to the uroporphyrinogen decarboxylase family. In terms of assembly, homodimer.

Its subcellular location is the cytoplasm. The catalysed reaction is uroporphyrinogen III + 4 H(+) = coproporphyrinogen III + 4 CO2. It functions in the pathway porphyrin-containing compound metabolism; protoporphyrin-IX biosynthesis; coproporphyrinogen-III from 5-aminolevulinate: step 4/4. In terms of biological role, catalyzes the decarboxylation of four acetate groups of uroporphyrinogen-III to yield coproporphyrinogen-III. The polypeptide is Uroporphyrinogen decarboxylase (Phenylobacterium zucineum (strain HLK1)).